The chain runs to 2559 residues: Ubiquitin carboxyl-terminal hydrolase 9X (2559 aa).

Polar residues predominate over residues 1-44 (MTATTRGSPVGGNDNQGQAPDGQSQPPLQQNQTSSPDSSNENSP). The interval 1–64 (MTATTRGSPV…DAPPQIEDEE (64 aa)) is disordered. Phosphoserine occurs at positions 374, 375, and 588. Residues 967–999 (QISSNMPSSPDSSSDSSTGSPGNHGNHYSDGPN) are disordered. A compositionally biased stretch (low complexity) spans 969 to 989 (SSNMPSSPDSSSDSSTGSPGN). The USP domain occupies 1557 to 1956 (VGLKNAGATC…NAYILFYERM (400 aa)). The active-site Nucleophile is Cys-1566. A disordered region spans residues 1592–1633 (GSDVDDDMSGDEKQDNESNVDPRDDVFGYPQQFEDKPPLSKT). Ser-1600 carries the post-translational modification Phosphoserine. Composition is skewed to basic and acidic residues over residues 1601–1617 (GDEKQDNESNVDPRDDV) and 1624–1633 (FEDKPPLSKT). Residues Cys-1727, His-1729, Cys-1771, and Cys-1774 each coordinate Zn(2+). The active-site Proton acceptor is the His-1879. Phosphoserine is present on Ser-2443. The span at 2475–2484 (PEEEPDDQDA) shows a compositional bias: acidic residues. The disordered stretch occupies residues 2475–2559 (PEEEPDDQDA…QTKGSVKCTY (85 aa)). 2 stretches are compositionally biased toward polar residues: residues 2503 to 2513 (PGSQYQQNNHV) and 2527 to 2537 (NNPQRTGQRAQ). Phosphotyrosine is present on Tyr-2540. Ser-2547 carries the phosphoserine modification. Position 2551 is a phosphothreonine (Thr-2551).

Belongs to the peptidase C19 family. Interacts with SMAD4, MARK4, NUAK1 and BIRC5/survivin. Interacts with DCX. Interacts with OTUD4 and USP7; the interaction is direct. As to expression, highest levels in liver and brain with expression also detected in heart, muscle, spleen and kidney (at protein leve). Ubiquitously expressed in adult tissues.

It localises to the cytoplasm. Its subcellular location is the cytosol. It is found in the cell projection. The protein localises to the growth cone. The protein resides in the cytoskeleton. It localises to the cilium axoneme. It catalyses the reaction Thiol-dependent hydrolysis of ester, thioester, amide, peptide and isopeptide bonds formed by the C-terminal Gly of ubiquitin (a 76-residue protein attached to proteins as an intracellular targeting signal).. Deubiquitinase involved both in the processing of ubiquitin precursors and of ubiquitinated proteins. May therefore play an important regulatory role at the level of protein turnover by preventing degradation of proteins through the removal of conjugated ubiquitin. Specifically hydrolyzes 'Lys-11'-, followed by 'Lys-63'-, 'Lys-48'- and 'Lys-6'-linked polyubiquitins chains. Essential component of TGF-beta/BMP signaling cascade. Specifically deubiquitinates monoubiquitinated SMAD4, opposing the activity of E3 ubiquitin-protein ligase TRIM33. Deubiquitinates alkylation repair enzyme ALKBH3. OTUD4 recruits USP7 and USP9X to stabilize ALKBH3, thereby promoting the repair of alkylated DNA lesions. Deubiquitinates RNA demethylase enzyme ALKBH5, promoting its stability. Deubiquitinates mTORC2 complex component RICTOR at 'Lys-294' by removing 'Lys-63'-linked polyubiquitin chains, stabilizing RICTOR and enhancing its binding to MTOR, thus promoting mTORC2 complex assembly. Regulates chromosome alignment and segregation in mitosis by regulating the localization of BIRC5/survivin to mitotic centromeres. Involved in axonal growth and neuronal cell migration. Regulates cellular clock function by enhancing the protein stability and transcriptional activity of the core circadian protein BMAL1 via its deubiquitinating activity. Acts as a regulator of peroxisome import by mediating deubiquitination of PEX5: specifically deubiquitinates PEX5 monoubiquitinated at 'Cys-11' following its retrotranslocation into the cytosol, resetting PEX5 for a subsequent import cycle. Deubiquitinates PEG10. Inhibits the activation of the Hippo signaling pathway via deubiquitination of AMOTL2 at 'Lys-337' and 'Lys-404' which prohibits its interaction with and activation of LATS2. Loss of LATS2 activation and subsequent loss of YAP1 phosphorylation results in an increase in YAP1-driven transcription of target genes. The protein is Ubiquitin carboxyl-terminal hydrolase 9X of Mus musculus (Mouse).